The sequence spans 125 residues: Phosphoribosyl-AMP cyclohydrolase (125 aa).

Position 80 (Asp80) interacts with Mg(2+). Cys81 is a Zn(2+) binding site. 2 residues coordinate Mg(2+): Asp82 and Asp84. Zn(2+) is bound by residues Cys97 and Cys104.

This sequence belongs to the PRA-CH family. Homodimer. Mg(2+) serves as cofactor. Zn(2+) is required as a cofactor.

It is found in the cytoplasm. The catalysed reaction is 1-(5-phospho-beta-D-ribosyl)-5'-AMP + H2O = 1-(5-phospho-beta-D-ribosyl)-5-[(5-phospho-beta-D-ribosylamino)methylideneamino]imidazole-4-carboxamide. It participates in amino-acid biosynthesis; L-histidine biosynthesis; L-histidine from 5-phospho-alpha-D-ribose 1-diphosphate: step 3/9. Its function is as follows. Catalyzes the hydrolysis of the adenine ring of phosphoribosyl-AMP. The sequence is that of Phosphoribosyl-AMP cyclohydrolase from Leifsonia xyli subsp. xyli (strain CTCB07).